A 471-amino-acid polypeptide reads, in one-letter code: Collagenase 3 (471 aa).

The N-terminal stretch at 1–19 (MQPGVLAACLLLSWTHCWS) is a signal peptide. Residues 20-103 (LPLLNSNEDD…PRCGVPDVGE (84 aa)) constitute a propeptide, activation peptide. Residues 94–101 (PRCGVPDV) carry the Cysteine switch motif. C96 provides a ligand contact to Zn(2+). The N-linked (GlcNAc...) asparagine glycan is linked to N117. Ca(2+) is bound at residue D128. N-linked (GlcNAc...) asparagine glycans are attached at residues N152 and N158. Residue D162 participates in Ca(2+) binding. Positions 172 and 174 each coordinate Zn(2+). The interaction with TIMP2 stretch occupies residues 176–246 (YPFDGPSGLL…GALMFPIYTY (71 aa)). Ca(2+) contacts are provided by D179, G180, S182, and L184. Residue H187 participates in Zn(2+) binding. Residues N194, G196, and D198 each coordinate Ca(2+). A Zn(2+)-binding site is contributed by H200. Residues D202, D203, and E205 each contribute to the Ca(2+) site. H222 lines the Zn(2+) pocket. The active site involves E223. Positions 226, 232, and 240 each coordinate Zn(2+). Residues 263-284 (QSLYGPGDEDPNPKHPKTPDKC) are disordered. The segment at 268-471 (PGDEDPNPKH…VMPTNSLLWC (204 aa)) is interaction with collagen. Basic and acidic residues predominate over residues 273–284 (PNPKHPKTPDKC). 4 Hemopexin repeats span residues 281-330 (PDKC…WPEL), 331-377 (PNRI…GFPR), 379-427 (VKKI…FPGI), and 428-471 (GGKV…LLWC). C284 and C471 are oxidised to a cystine. Ca(2+)-binding residues include D291, I293, D335, and A337. Y366 carries the phosphotyrosine; by PKDCC modification. Ca(2+)-binding residues include S383 and A385. Residue N409 is glycosylated (N-linked (GlcNAc...) asparagine). D432 and V434 together coordinate Ca(2+).

The protein belongs to the peptidase M10A family. Ca(2+) is required as a cofactor. It depends on Zn(2+) as a cofactor. The proenzyme is activated by removal of the propeptide; this cleavage can be effected by other matrix metalloproteinases, such as MMP2, MMP3 and MMP14 and may involve several cleavage steps. Cleavage can also be autocatalytic, after partial maturation by another protease or after treatment with 4-aminophenylmercuric acetate (APMA) (in vitro). Post-translationally, N-glycosylated. In terms of processing, tyrosine phosphorylated by PKDCC/VLK.

Its subcellular location is the secreted. It is found in the extracellular space. The protein localises to the extracellular matrix. Plays a role in the degradation of extracellular matrix proteins including fibrillar collagen, fibronectin, TNC and ACAN. Cleaves triple helical collagens, including type I, type II and type III collagen, but has the highest activity with soluble type II collagen. Can also degrade collagen type IV, type XIV and type X. May also function by activating or degrading key regulatory proteins, such as TGFB1 and CCN2. Plays a role in wound healing, tissue remodeling, cartilage degradation, bone development, bone mineralization and ossification. Required for normal embryonic bone development and ossification. Plays a role in the healing of bone fractures via endochondral ossification. Plays a role in wound healing, probably by a mechanism that involves proteolytic activation of TGFB1 and degradation of CCN2. Plays a role in keratinocyte migration during wound healing. May play a role in cell migration and in tumor cell invasion. The chain is Collagenase 3 (MMP13) from Oryctolagus cuniculus (Rabbit).